Consider the following 187-residue polypeptide: Photosystem I assembly protein Ycf4 (187 aa).

Helical transmembrane passes span L21 to S43 and L69 to G91.

This sequence belongs to the Ycf4 family.

Its subcellular location is the plastid. The protein localises to the cyanelle thylakoid membrane. Functionally, seems to be required for the assembly of the photosystem I complex. The sequence is that of Photosystem I assembly protein Ycf4 from Cyanophora paradoxa.